We begin with the raw amino-acid sequence, 1029 residues long: Tyrosine-protein kinase-like otk (1029 aa).

Residues 1–18 (MISIYGLVMALMMASVLA) form the signal peptide. Residues 19 to 577 (SSSRFQRVPQ…GGDGFLVTRA (559 aa)) lie on the Extracellular side of the membrane. 5 Ig-like C2-type domains span residues 21 to 104 (SRFQ…REAS), 105 to 195 (PPAK…RVMS), 247 to 361 (PEDL…APIS), 364 to 459 (PGIL…VAIN), and 464 to 554 (PKFS…VQLV). Asparagine 35 carries N-linked (GlcNAc...) asparagine glycosylation. 4 cysteine pairs are disulfide-bonded: cysteine 42-cysteine 91, cysteine 133-cysteine 184, cysteine 272-cysteine 350, and cysteine 395-cysteine 443. Asparagine 332, asparagine 413, asparagine 425, asparagine 440, asparagine 453, asparagine 508, and asparagine 520 each carry an N-linked (GlcNAc...) asparagine glycan. The cysteines at positions 486 and 538 are disulfide-linked. Residues 578 to 598 (VLITMTVALAYIVLVVGLMLW) form a helical membrane-spanning segment. Residues 599 to 1029 (CRYRRQARKA…LSKAMQIAEK (431 aa)) lie on the Cytoplasmic side of the membrane. Disordered regions lie at residues 613–675 (LSTK…KKSA) and 714–756 (SPSD…KTSM). A compositionally biased stretch (polar residues) spans 651–669 (KSSGDAQKSDDTACSQQSR). Serine 674 carries the phosphoserine modification. One can recognise a Protein kinase; inactive domain in the interval 688-1024 (LSELIQIGRG…QLGAALSKAM (337 aa)). The segment covering 716-727 (SDKDADTEKQHS) has biased composition (basic and acidic residues).

This sequence belongs to the protein kinase superfamily. Tyr protein kinase family. Insulin receptor subfamily. As to quaternary structure, interacts with plexA; component of a receptor complex that mediates the repulsive signaling in response to Semaphorin ligands.

It is found in the cell membrane. In terms of biological role, acts as a calcium-dependent, homophilic cell adhesion molecule that regulates neural recognition during the development of the nervous system. Component of the repulsive Plexin signaling response to regulate motor axon guidance at the embryonic stage. Also component of a receptor complex that is required in the adult visual system to innervate the lamina layer; specific targeting of R1-R6 axons. This chain is Tyrosine-protein kinase-like otk, found in Drosophila sechellia (Fruit fly).